The sequence spans 155 residues: MAKGEGNVLAQHKKARHDYHIVETVEAGIVLTGTEIKSVRAARIQLKDGFAQIKNGEAWLVNVHIAPFEQGNIWNADPERTRKLLLKKREIQHLADELKGTGMTLIPLKVYLKDGFAKVLIGLAKGKHDYDKRESIKRREQDRDIRRVMKSVNRR.

Belongs to the SmpB family.

The protein localises to the cytoplasm. Required for rescue of stalled ribosomes mediated by trans-translation. Binds to transfer-messenger RNA (tmRNA), required for stable association of tmRNA with ribosomes. tmRNA and SmpB together mimic tRNA shape, replacing the anticodon stem-loop with SmpB. tmRNA is encoded by the ssrA gene; the 2 termini fold to resemble tRNA(Ala) and it encodes a 'tag peptide', a short internal open reading frame. During trans-translation Ala-aminoacylated tmRNA acts like a tRNA, entering the A-site of stalled ribosomes, displacing the stalled mRNA. The ribosome then switches to translate the ORF on the tmRNA; the nascent peptide is terminated with the 'tag peptide' encoded by the tmRNA and targeted for degradation. The ribosome is freed to recommence translation, which seems to be the essential function of trans-translation. The polypeptide is SsrA-binding protein (Streptococcus equi subsp. equi (strain 4047)).